The chain runs to 285 residues: 2-dehydro-3-deoxyphosphooctonate aldolase (285 aa).

This sequence belongs to the KdsA family.

The protein resides in the cytoplasm. It carries out the reaction D-arabinose 5-phosphate + phosphoenolpyruvate + H2O = 3-deoxy-alpha-D-manno-2-octulosonate-8-phosphate + phosphate. It participates in carbohydrate biosynthesis; 3-deoxy-D-manno-octulosonate biosynthesis; 3-deoxy-D-manno-octulosonate from D-ribulose 5-phosphate: step 2/3. Its pathway is bacterial outer membrane biogenesis; lipopolysaccharide biosynthesis. The polypeptide is 2-dehydro-3-deoxyphosphooctonate aldolase (Acidovorax ebreus (strain TPSY) (Diaphorobacter sp. (strain TPSY))).